A 504-amino-acid polypeptide reads, in one-letter code: Maturase K (504 aa).

This sequence belongs to the intron maturase 2 family. MatK subfamily.

Its subcellular location is the plastid. The protein resides in the chloroplast. Its function is as follows. Usually encoded in the trnK tRNA gene intron. Probably assists in splicing its own and other chloroplast group II introns. The protein is Maturase K of Olimarabidopsis pumila (Dwarf rocket).